The primary structure comprises 691 residues: Dipeptidyl-peptidase 5 (691 aa).

The N-terminal stretch at 1-20 is a signal peptide; sequence MKRTILSLLAAVSLAIPVYA. Active-site charge relay system residues include Ser-549, Asp-634, and His-666.

This sequence belongs to the peptidase S9C family. Homodimer.

Its subcellular location is the periplasm. Its function is as follows. Catalyzes the removal of dipeptides from the N-terminus of oligopeptides. Prefers Ala and hydrophobic residues at the P1 position, and has no preference for P2 residues. Shows the highest dipeptidyl peptidase activity toward the synthetic substrate Lys-Ala-methylcoumaryl-7-amide (Lys-Ala-MCA). Is likely involved in amino acid metabolism and bacterial growth/survival of asaccharolytic P.endodontalis, that utilizes amino acids from extracellular proteinaceous nutrients as energy and carbon sources. This Porphyromonas endodontalis (strain ATCC 35406 / DSM 24491 / JCM 8526 / CCUG 16442 / BCRC 14492 / NCTC 13058 / HG 370) (Bacteroides endodontalis) protein is Dipeptidyl-peptidase 5.